A 249-amino-acid polypeptide reads, in one-letter code: tRNA (guanine-N(7)-)-methyltransferase (249 aa).

The interval 1 to 24 is disordered; sequence MHSIPADTGHTPSRAPAGNGSPPA. S-adenosyl-L-methionine contacts are provided by Glu81, Glu106, Asp133, and Asp156. Residue Asp156 is part of the active site. A substrate-binding site is contributed by Lys160. The segment at 162–167 is interaction with RNA; sequence RHNKRR. Residues Asp192 and 227 to 230 contribute to the substrate site; that span reads TKFE.

The protein belongs to the class I-like SAM-binding methyltransferase superfamily. TrmB family.

The enzyme catalyses guanosine(46) in tRNA + S-adenosyl-L-methionine = N(7)-methylguanosine(46) in tRNA + S-adenosyl-L-homocysteine. The protein operates within tRNA modification; N(7)-methylguanine-tRNA biosynthesis. Its function is as follows. Catalyzes the formation of N(7)-methylguanine at position 46 (m7G46) in tRNA. In Paracidovorax citrulli (strain AAC00-1) (Acidovorax citrulli), this protein is tRNA (guanine-N(7)-)-methyltransferase.